A 402-amino-acid polypeptide reads, in one-letter code: Putative cystathionine beta-lyase (402 aa).

Lys236 carries the N6-(pyridoxal phosphate)lysine modification.

It belongs to the class-II pyridoxal-phosphate-dependent aminotransferase family. MalY/PatB cystathionine beta-lyase subfamily. The cofactor is pyridoxal 5'-phosphate.

The enzyme catalyses L,L-cystathionine + H2O = L-homocysteine + pyruvate + NH4(+). The catalysed reaction is an S-substituted L-cysteine + H2O = a thiol + pyruvate + NH4(+). It participates in amino-acid biosynthesis; L-methionine biosynthesis via de novo pathway; L-homocysteine from L-cystathionine: step 1/1. The protein is Putative cystathionine beta-lyase of Mycobacterium leprae (strain TN).